Reading from the N-terminus, the 259-residue chain is Hydroxyacylglutathione hydrolase (259 aa).

The Zn(2+) site is built by His56, His58, Asp60, His61, His112, Asp133, and His171.

Belongs to the metallo-beta-lactamase superfamily. Glyoxalase II family. In terms of assembly, monomer. Requires Zn(2+) as cofactor.

The enzyme catalyses an S-(2-hydroxyacyl)glutathione + H2O = a 2-hydroxy carboxylate + glutathione + H(+). It functions in the pathway secondary metabolite metabolism; methylglyoxal degradation; (R)-lactate from methylglyoxal: step 2/2. Functionally, thiolesterase that catalyzes the hydrolysis of S-D-lactoyl-glutathione to form glutathione and D-lactic acid. This Pseudomonas putida (strain GB-1) protein is Hydroxyacylglutathione hydrolase.